A 310-amino-acid chain; its full sequence is Putative S-adenosyl-L-methionine-dependent methyltransferase MUL_4763 (310 aa).

Residues Asp137 and 166-167 (DL) contribute to the S-adenosyl-L-methionine site.

It belongs to the UPF0677 family.

Functionally, exhibits S-adenosyl-L-methionine-dependent methyltransferase activity. This is Putative S-adenosyl-L-methionine-dependent methyltransferase MUL_4763 from Mycobacterium ulcerans (strain Agy99).